We begin with the raw amino-acid sequence, 248 residues long: Coproheme decarboxylase (248 aa).

Fe-coproporphyrin III contacts are provided by residues Arg130, Tyr144, 144–148 (YPMDK), Lys148, His171, Gln184, and Ser222. Tyr144 is a catalytic residue.

Belongs to the ChdC family. Type 1 subfamily. In terms of assembly, homopentamer. The cofactor is Fe-coproporphyrin III.

It carries out the reaction Fe-coproporphyrin III + 2 H2O2 + 2 H(+) = heme b + 2 CO2 + 4 H2O. It catalyses the reaction Fe-coproporphyrin III + H2O2 + H(+) = harderoheme III + CO2 + 2 H2O. The catalysed reaction is harderoheme III + H2O2 + H(+) = heme b + CO2 + 2 H2O. It participates in porphyrin-containing compound metabolism; protoheme biosynthesis. Its function is as follows. Involved in coproporphyrin-dependent heme b biosynthesis. Catalyzes the decarboxylation of Fe-coproporphyrin III (coproheme) to heme b (protoheme IX), the last step of the pathway. The reaction occurs in a stepwise manner with a three-propionate harderoheme intermediate. The protein is Coproheme decarboxylase of Geobacillus stearothermophilus (strain DSM 13240 / CIP 106956 / 10).